The primary structure comprises 249 residues: tRNA pseudouridine synthase A (249 aa).

The active-site Nucleophile is Asp53. Substrate is bound at residue Tyr111.

This sequence belongs to the tRNA pseudouridine synthase TruA family. As to quaternary structure, homodimer.

It catalyses the reaction uridine(38/39/40) in tRNA = pseudouridine(38/39/40) in tRNA. Formation of pseudouridine at positions 38, 39 and 40 in the anticodon stem and loop of transfer RNAs. The protein is tRNA pseudouridine synthase A of Streptococcus mutans serotype c (strain ATCC 700610 / UA159).